Reading from the N-terminus, the 370-residue chain is MEVSNLSGATPGIAFPPGPESCSDSPSSGRSMGSTPGGLILSGREPPFSAFTVLVVTLLVLLIAATFLWNLLVLVTILRVRAFHRVPHNLVASTAVSDVLVAALVMPLSLVSELSAGRRWQLGRSLCHVWISFDVLCCTASIWNVAAIALDRYWTITRHLQYTLRTRRRASALMIAITWALSALIALAPLLFGWGEAYDARLQRCQVSQEPSYAVFSTCGAFYVPLAVVLFVYWKIYKAAKFRFGRRRRAVVPLPATTQAKEAPQESETVFTARCRATVAFQTSGDSWREQKEKRAAMMVGILIGVFVLCWIPFFLTELVSPLCACSLPPIWKSIFLWLGYSNSFFNPLIYTAFNKNYNNAFKSLFTKQR.

The segment at 1-36 is disordered; that stretch reads MEVSNLSGATPGIAFPPGPESCSDSPSSGRSMGSTP. Over 1 to 48 the chain is Extracellular; that stretch reads MEVSNLSGATPGIAFPPGPESCSDSPSSGRSMGSTPGGLILSGREPPF. N-linked (GlcNAc...) asparagine glycosylation occurs at Asn-5. Over residues 20–36 the composition is skewed to low complexity; the sequence is ESCSDSPSSGRSMGSTP. The helical transmembrane segment at 49–75 threads the bilayer; sequence SAFTVLVVTLLVLLIAATFLWNLLVLV. Residues 76–88 are Cytoplasmic-facing; that stretch reads TILRVRAFHRVPH. Residues 89–115 traverse the membrane as a helical segment; sequence NLVASTAVSDVLVAALVMPLSLVSELS. The Extracellular segment spans residues 116–127; sequence AGRRWQLGRSLC. A disulfide bridge links Cys-127 with Cys-205. The helical transmembrane segment at 128–150 threads the bilayer; it reads HVWISFDVLCCTASIWNVAAIAL. Asp-134 serves as a coordination point for serotonin. Residues 151-168 are Cytoplasmic-facing; it reads DRYWTITRHLQYTLRTRR. The chain crosses the membrane as a helical span at residues 169-189; it reads RASALMIAITWALSALIALAP. Topologically, residues 190–211 are extracellular; the sequence is LLFGWGEAYDARLQRCQVSQEP. The helical transmembrane segment at 212–233 threads the bilayer; sequence SYAVFSTCGAFYVPLAVVLFVY. Topologically, residues 234–300 are cytoplasmic; the sequence is WKIYKAAKFR…QKEKRAAMMV (67 aa). The chain crosses the membrane as a helical span at residues 301–325; the sequence is GILIGVFVLCWIPFFLTELVSPLCA. The Extracellular portion of the chain corresponds to 326–327; that stretch reads CS. Residues 328–352 traverse the membrane as a helical segment; the sequence is LPPIWKSIFLWLGYSNSFFNPLIYT. The Cytoplasmic portion of the chain corresponds to 353-370; sequence AFNKNYNNAFKSLFTKQR.

This sequence belongs to the G-protein coupled receptor 1 family. In terms of tissue distribution, brain; in the CA1 region of hippocampus, the medial habenula, and raphe nuclei.

Its subcellular location is the cell membrane. Its function is as follows. G-protein coupled receptor for 5-hydroxytryptamine (serotonin), a biogenic hormone that functions as a neurotransmitter, a hormone and a mitogen. Also functions as a receptor for ergot alkaloid derivatives and other psychoactive substances. Ligand binding causes a conformation change that triggers signaling via guanine nucleotide-binding proteins (G proteins) and modulates the activity of downstream effectors. Htr5b is coupled to G(i)/G(o) G alpha proteins and mediates inhibitory neurotransmission: signaling inhibits adenylate cyclase activity and activates a phosphatidylinositol-calcium second messenger system that regulates the release of Ca(2+) ions from intracellular stores. This is 5-hydroxytryptamine receptor 5B from Rattus norvegicus (Rat).